We begin with the raw amino-acid sequence, 552 residues long: Glutamine--tRNA ligase (552 aa).

The short motif at 34-44 is the 'HIGH' region element; the sequence is PEPNGYLHIGH. ATP-binding positions include 35-37 and 41-47; these read EPN and HIGHAKS. Residues D67 and Y212 each contribute to the L-glutamine site. Residues T231, 261–262, and 269–271 contribute to the ATP site; these read RL and MSK. The 'KMSKS' region motif lies at 268 to 272; it reads LMSKR.

It belongs to the class-I aminoacyl-tRNA synthetase family. Monomer.

The protein resides in the cytoplasm. The catalysed reaction is tRNA(Gln) + L-glutamine + ATP = L-glutaminyl-tRNA(Gln) + AMP + diphosphate. This chain is Glutamine--tRNA ligase, found in Hamiltonella defensa subsp. Acyrthosiphon pisum (strain 5AT).